We begin with the raw amino-acid sequence, 467 residues long: L-histidine transporter HutT (467 aa).

The next 13 membrane-spanning stretches (helical) occupy residues Phe18 to Gln38, Met39 to Met59, Val71 to Leu91, Met99 to Pro119, Ile125 to Phe145, Leu155 to Phe175, Val200 to Ile220, Ile245 to Ile265, Gly280 to Ile300, Trp334 to Ile354, Val358 to Leu378, Phe402 to Gly422, and Ala429 to Cys449.

This sequence belongs to the amino acid-polyamine-organocation (APC) superfamily. Amino acid transporter (AAT) (TC 2.A.3.1) family.

Its subcellular location is the cell inner membrane. It carries out the reaction L-histidine(out) + n H(+)(out) = L-histidine(in) + n H(+)(in). Transport activity is inhibited by the proton ionophores carbonyl cyanide m-chlorophenyl hydrazine (CCCP) and 2,4-dinitrophenol (DNP), but not by valinomycin, nigericin and nonactin. Uptake is reduced in the presence of the sulfhydryl reagent N-ethylmaleimide (NEM). Uptake is not affected by arginine, lysine, proline or compounds structurally related to histidine such as imidazole, 3-amino-1,2,4-triazole and urocanate. Only 1,2,4-triazolyl-3-alanine reduces the rate of L-histidine uptake significantly. Its function is as follows. Major high-affinity histidine transporter. Binds and catalyzes the uptake of histidine into the cell. Functions as an histidine:proton symporter with high specificity for histidine. The chain is L-histidine transporter HutT from Pseudomonas putida (strain ATCC 47054 / DSM 6125 / CFBP 8728 / NCIMB 11950 / KT2440).